The chain runs to 1087 residues: Kinesin-like protein KIN-14F (1087 aa).

The region spanning 1–110 (MDQGAMETLP…CILCLKGFYE (110 aa)) is the Calponin-homology (CH) domain. Residues 136–155 (SSPPQYGIGSESTTDESVSL) are disordered. Residues 377–705 (TIRVYCRVRP…LKFAQRVASI (329 aa)) form the Kinesin motor domain. 461–468 (GQTGSGKT) lines the ATP pocket. Residues 710-749 (ARSNKETGEIRDLKDEISSLKSAMEKKEAELEQLRSGSIR) adopt a coiled-coil conformation. Disordered regions lie at residues 740–858 (LEQL…PVSR), 923–949 (QGGV…FQKL), and 1004–1087 (DSTL…FMVP). Polar residues-rich tracts occupy residues 744–754 (RSGSIRNTTEC), 780–797 (PQPN…CSTG), and 836–856 (TDRA…NLPV). The span at 1017 to 1033 (EPPSKSKNAQRNSSKNS) shows a compositional bias: polar residues. The segment covering 1042-1054 (YAHEDTSLVDDKP) has biased composition (basic and acidic residues). The span at 1076-1087 (SRSTHHARFMVP) shows a compositional bias: basic residues.

The protein belongs to the TRAFAC class myosin-kinesin ATPase superfamily. Kinesin family. KIN-14 subfamily. Interacts (via C-terminus) with VDAC3. In terms of tissue distribution, expressed in roots, leaves, stems and flowers (at protein level).

Its subcellular location is the cytoplasm. It is found in the cytoskeleton. The protein resides in the mitochondrion. In terms of biological role, required for keeping the ATP levels stable and balancing the aerobic respiration pathways during seed germination at low temperature. The chain is Kinesin-like protein KIN-14F from Arabidopsis thaliana (Mouse-ear cress).